A 735-amino-acid chain; its full sequence is E3 ubiquitin-protein ligase SH3RF2 (735 aa).

Residues Cys-12–Arg-53 form an RING-type zinc finger. 2 consecutive SH3 domains span residues Asp-125 to Gln-184 and Gln-187 to Ser-252. Disordered regions lie at residues Ser-260–Gln-301 and Thr-335–Met-373. Residues Leu-273 to Arg-289 show a composition bias toward polar residues. The interval Met-373–Ala-466 is interaction with PAK4. Positions Leu-383–Ser-444 constitute an SH3 3 domain. Disordered regions lie at residues Val-472–Ser-534, Glu-612–Asn-637, and Val-649–Lys-735. The segment covering Arg-523–Ser-534 has biased composition (polar residues). The segment covering Ser-617–Ala-627 has biased composition (pro residues). An interaction with PPP1CA region spans residues Lys-647–Gln-652. A Phosphoserine modification is found at Ser-655. The span at Phe-715–Lys-735 shows a compositional bias: polar residues.

Belongs to the SH3RF family. Interacts with FASLG and PPP1CA. Interacts with PAK4 and TNFRSF1A. Interacts with DLK1, MAP3K10, MAPK8IP1/JIP1, MAPK8IP2/JIP2 and MAPK8IP3/JIP3. Interacts with RAC1 (both active GTP- or inactive GDP-bound forms). In terms of processing, autoubiquitinated.

It is found in the nucleus. It carries out the reaction S-ubiquitinyl-[E2 ubiquitin-conjugating enzyme]-L-cysteine + [acceptor protein]-L-lysine = [E2 ubiquitin-conjugating enzyme]-L-cysteine + N(6)-ubiquitinyl-[acceptor protein]-L-lysine.. It functions in the pathway protein modification; protein ubiquitination. Has E3 ubiquitin-protein ligase activity. Acts as an anti-apoptotic regulator of the JNK pathway by ubiquitinating and promoting the degradation of SH3RF1, a scaffold protein that is required for pro-apoptotic JNK activation. Facilitates TNF-alpha-mediated recruitment of adapter proteins TRADD and RIPK1 to TNFRSF1A and regulates PAK4 protein stability via inhibition of its ubiquitin-mediated proteasomal degradation. Inhibits PPP1CA phosphatase activity. In Rattus norvegicus (Rat), this protein is E3 ubiquitin-protein ligase SH3RF2 (Sh3rf2).